The chain runs to 593 residues: Brain-enriched guanylate kinase-associated protein (593 aa).

Position 1 is an N-acetylmethionine (Met1). A Phosphotyrosine modification is found at Tyr137. 6 positions are modified to phosphoserine: Ser200, Ser229, Ser246, Ser265, Ser346, and Ser373. Arg381 carries the asymmetric dimethylarginine modification. 9 positions are modified to phosphoserine: Ser455, Ser465, Ser475, Ser477, Ser500, Ser502, Ser506, Ser553, and Ser563. The interval Leu499–Asn593 is disordered.

In terms of assembly, interacts with DLG4 and DLGAP1 and forms a ternary complex.

Its subcellular location is the cytoplasm. The protein localises to the membrane. In terms of biological role, may sustain the structure of the postsynaptic density (PSD). The protein is Brain-enriched guanylate kinase-associated protein (BEGAIN) of Homo sapiens (Human).